The following is a 311-amino-acid chain: Olfactory receptor 10J4 (311 aa).

Over M1–F29 the chain is Extracellular. Residues V30–I50 form a helical membrane-spanning segment. The Cytoplasmic segment spans residues R51 to H57. The chain crosses the membrane as a helical span at residues T58–I78. The Extracellular portion of the chain corresponds to N79–C98. C98 and C180 are disulfide-bonded. A helical transmembrane segment spans residues A99 to M119. Over G120 to S149 the chain is Cytoplasmic. The helical transmembrane segment at W150–C170 threads the bilayer. Residues D171 to L202 lie on the Extracellular side of the membrane. A helical membrane pass occupies residues I203 to V223. The Cytoplasmic portion of the chain corresponds to T224 to K237. A helical membrane pass occupies residues A238–G254. At R255–R272 the chain is on the extracellular side. A helical membrane pass occupies residues L273–L292. Topologically, residues R293–S311 are cytoplasmic.

It belongs to the G-protein coupled receptor 1 family.

It localises to the cell membrane. Odorant receptor. The chain is Olfactory receptor 10J4 (OR10J4) from Homo sapiens (Human).